The chain runs to 564 residues: Probable diguanylate cyclase DgcQ (564 aa).

Helical transmembrane passes span 20-40 (LGPG…STLL) and 360-380 (IALT…WYVI). In terms of domain architecture, GGDEF spans 428 to 563 (HPFSVIQVDL…GRNRVFASDN (136 aa)). Aspartate 436 contributes to the Mg(2+) binding site. Substrate-binding residues include asparagine 444, histidine 449, and aspartate 453. Glutamate 479 lines the Mg(2+) pocket. The active-site Proton acceptor is glutamate 479.

As to quaternary structure, homodimer. Requires Mg(2+) as cofactor.

Its subcellular location is the cell inner membrane. It carries out the reaction 2 GTP = 3',3'-c-di-GMP + 2 diphosphate. It participates in glycan metabolism; bacterial cellulose biosynthesis. It functions in the pathway purine metabolism; 3',5'-cyclic di-GMP biosynthesis. Functionally, catalyzes the synthesis of cyclic-di-GMP (c-di-GMP) via the condensation of 2 GTP molecules. Cyclic-di-GMP is a second messenger which controls cell surface-associated traits in bacteria. Involved in the regulation of cellulose production. The polypeptide is Probable diguanylate cyclase DgcQ (Escherichia coli O157:H7).